The following is a 232-amino-acid chain: dITP/XTP pyrophosphatase (232 aa).

10–15 contributes to the substrate binding site; the sequence is TRNKGK. The Proton acceptor role is filled by Asp-72. Residue Asp-72 coordinates Mg(2+). Substrate-binding positions include Ser-73, 153-156, Lys-176, and 181-182; these read FGYD and HR.

This sequence belongs to the HAM1 NTPase family. In terms of assembly, homodimer. It depends on Mg(2+) as a cofactor.

The enzyme catalyses XTP + H2O = XMP + diphosphate + H(+). It carries out the reaction dITP + H2O = dIMP + diphosphate + H(+). It catalyses the reaction ITP + H2O = IMP + diphosphate + H(+). Pyrophosphatase that catalyzes the hydrolysis of nucleoside triphosphates to their monophosphate derivatives, with a high preference for the non-canonical purine nucleotides XTP (xanthosine triphosphate), dITP (deoxyinosine triphosphate) and ITP. Seems to function as a house-cleaning enzyme that removes non-canonical purine nucleotides from the nucleotide pool, thus preventing their incorporation into DNA/RNA and avoiding chromosomal lesions. This Syntrophobacter fumaroxidans (strain DSM 10017 / MPOB) protein is dITP/XTP pyrophosphatase.